The following is an 829-amino-acid chain: Leucine--tRNA ligase (829 aa).

The short motif at 40–50 is the 'HIGH' region element; it reads PYPSGNIHMGH. Positions 594-598 match the 'KMSKS' region motif; that stretch reads KMSKS. Residue Lys597 participates in ATP binding.

The protein belongs to the class-I aminoacyl-tRNA synthetase family.

It is found in the cytoplasm. It carries out the reaction tRNA(Leu) + L-leucine + ATP = L-leucyl-tRNA(Leu) + AMP + diphosphate. This chain is Leucine--tRNA ligase, found in Anaplasma marginale (strain St. Maries).